A 121-amino-acid polypeptide reads, in one-letter code: Putative SNURF-like protein (121 aa).

It belongs to the SNURF family.

The polypeptide is Putative SNURF-like protein (SNURFL) (Homo sapiens (Human)).